A 581-amino-acid chain; its full sequence is Peptidyl-prolyl cis-trans isomerase FKBP10 (581 aa).

Positions 1 to 33 (MFLVGSSSHTLHRLRILPLLLLLQTLERGLGRA) are cleaved as a signal peptide. PPIase FKBP-type domains lie at 61–149 (GDFV…LDVW), 173–261 (SDFV…LDVH), and 285–373 (GDFM…IDFH). Asn69, Asn181, Asn293, Asn309, Asn351, Asn392, and Asn406 each carry an N-linked (GlcNAc...) asparagine glycan. Positions 398–485 (GDFIRYHYNC…LFEVELVSRE (88 aa)) constitute a PPIase FKBP-type 4 domain. EF-hand domains are found at residues 496–531 (WYQD…QVNE) and 541–576 (DPDK…DQER). Positions 509, 511, 513, 515, 520, 554, 556, 558, 560, and 565 each coordinate Ca(2+). Residues 533–581 (KGRLMPGQDPDKTISDMFQNQDRNQDGKITAEELKLKSDEDQERVHEEL) are disordered. Residues 555–581 (RNQDGKITAEELKLKSDEDQERVHEEL) are compositionally biased toward basic and acidic residues. Residues 578 to 581 (HEEL) carry the Prevents secretion from ER motif.

Post-translationally, N-glycosylated. In terms of processing, phosphorylated. As to expression, expressed in aorta, brain, heart, kidney, lung, spleen and testis. Not detected in liver.

It is found in the endoplasmic reticulum lumen. The catalysed reaction is [protein]-peptidylproline (omega=180) = [protein]-peptidylproline (omega=0). With respect to regulation, inhibited by both FK506 and rapamycin, but not by cyclosporin A. PPIases accelerate the folding of proteins during protein synthesis. This Mus musculus (Mouse) protein is Peptidyl-prolyl cis-trans isomerase FKBP10 (Fkbp10).